The following is a 757-amino-acid chain: MKKSIIAFPRIGSNRELKFALEKYFRKEISEDELQIVAKELRLESWKSQKEAGIDYPISNDFSFYDQTLDLSIALGVIPERYKKLKLNELDTLFALARGFQDEENDVKARPMKKWFNTNYHYIVPEISKETVIKANFSKLLNEYQEAKTAGFETRPTIIGPYTFLILADYLSGVTEDAILSDLIGAYTILFDQLNNLGGEWLQIEEPALVLDQTEEEQQLFIKIYQELLKNKNKLRVLLQTYFGDLRNSYQEIIKLDFDGIGLDFVEGRESVKLVQKYGFPKNKLLFAGVVNGKNIWRNHYQKTLSLLKDLGNIDNIVINTSCSLQHVPVTTENETKLSKEILNHFAFAKEKLVEVSEISEIYVKKNTSLLDKNIALFDKNRVQENIQLKQKIIHLTDKDFIRTPSLVERRADQIKALNLPLLPTTTIGSFPQTPEIRKSRLQYKRGELSKSDYEAFLEEKIKECLELQENIGLDVLVHGEFERNDMVEYFGEQLDGYIFTQKAWVQSYGTRCVKPPIVWGDITRPQAMTVRWSAYAQSQTSKPVKGMLTGPVTILNWSFPREDISLKESTLQLALAVQEEVLDLEKSGVKIIQIDEAALREKLPLRRSDWYSEYLDWAIPAFRLVHSKVKAETQIHTHMCYSEFEDIIPSIDAMDADVISFEASRSQLSIIDALKAHHFQTLVGPGVYDIHSPRIPSSQEIKIQLEKILNKLPIEQVWVNPDCGLKTRGNKETIPSLTHLVEATKEVRKGKITYDK.

Residues R15 to K18 and K114 contribute to the 5-methyltetrahydropteroyltri-L-glutamate site. L-homocysteine-binding positions include I428 to S430 and E481. Residues I428–S430 and E481 contribute to the L-methionine site. 5-methyltetrahydropteroyltri-L-glutamate is bound by residues R512 to C513 and W558. D596 lines the L-homocysteine pocket. D596 is a binding site for L-methionine. E602 provides a ligand contact to 5-methyltetrahydropteroyltri-L-glutamate. The Zn(2+) site is built by H639, C641, and E663. H692 (proton donor) is an active-site residue. C724 provides a ligand contact to Zn(2+).

Belongs to the vitamin-B12 independent methionine synthase family. It depends on Zn(2+) as a cofactor.

It carries out the reaction 5-methyltetrahydropteroyltri-L-glutamate + L-homocysteine = tetrahydropteroyltri-L-glutamate + L-methionine. Its pathway is amino-acid biosynthesis; L-methionine biosynthesis via de novo pathway; L-methionine from L-homocysteine (MetE route): step 1/1. In terms of biological role, catalyzes the transfer of a methyl group from 5-methyltetrahydrofolate to homocysteine resulting in methionine formation. This Lactococcus lactis subsp. cremoris (strain MG1363) protein is 5-methyltetrahydropteroyltriglutamate--homocysteine methyltransferase.